A 222-amino-acid chain; its full sequence is Adenylate kinase (222 aa).

Position 2 (serine 2) is a propeptide, removed in mature form. Residues serine 2 and serine 3 each carry the N-acetylserine modification. 16–21 lines the ATP pocket; it reads GAGKGT. The segment at 36-65 is NMP; it reads ATGDMLRSQIAKGTQLGLEAKKIMDQGGLV. AMP-binding positions include threonine 37, arginine 42, 63-65, 92-95, and glutamine 99; these read GLV and GFPR. Positions 133 to 170 are LID; it reads GRLIHPASGRSYHKIFNPPKEDMKDDVTGEALVQRSDD. ATP contacts are provided by residues arginine 134 and 143 to 144; that span reads SY. AMP-binding residues include arginine 167 and arginine 178. Glutamine 206 lines the ATP pocket.

The protein belongs to the adenylate kinase family. AK2 subfamily. As to quaternary structure, monomer.

The protein localises to the cytoplasm. The protein resides in the cytosol. Its subcellular location is the mitochondrion intermembrane space. The catalysed reaction is AMP + ATP = 2 ADP. Its function is as follows. Catalyzes the reversible transfer of the terminal phosphate group between ATP and AMP. Plays an important role in cellular energy homeostasis and in adenine nucleotide metabolism. Adenylate kinase activity is critical for regulation of the phosphate utilization and the AMP de novo biosynthesis pathways. The polypeptide is Adenylate kinase (Saccharomyces cerevisiae (strain RM11-1a) (Baker's yeast)).